The following is a 94-amino-acid chain: Acylphosphatase (94 aa).

One can recognise an Acylphosphatase-like domain in the interval 7 to 94 (RLTARITGVV…GEFDDFRIID (88 aa)). Active-site residues include arginine 22 and asparagine 40.

This sequence belongs to the acylphosphatase family.

The catalysed reaction is an acyl phosphate + H2O = a carboxylate + phosphate + H(+). The polypeptide is Acylphosphatase (acyP) (Paenarthrobacter aurescens (strain TC1)).